Reading from the N-terminus, the 713-residue chain is Macrophage-expressed gene 1 protein (713 aa).

The N-terminal stretch at 1 to 19 is a signal peptide; sequence MNSFMALVLIWMIIACAEA. The 316-residue stretch at 30 to 345 folds into the MACPF domain; it reads GFQICKNALK…TAVRHYYTFN (316 aa). Cys34 and Cys70 are disulfide-bonded. The next 2 beta stranded transmembrane spans lie at 113 to 120 and 127 to 132; these read LSINTELA and GKFSTE. N-linked (GlcNAc...) asparagine glycosylation occurs at Asn185. 2 beta stranded membrane passes run 235–244 and 248–256; these read TVTASAGIAF and VNFKVETDY. N-linked (GlcNAc...) asparagine glycosylation occurs at Asn269. A disulfide bridge connects residues Cys350 and Cys369. Asn375 carries an N-linked (GlcNAc...) asparagine glycan. 5 disulfide bridges follow: Cys385–Cys394, Cys432–Cys446, Cys436–Cys442, Cys531–Cys569, and Cys554–Cys574. A P2 region spans residues 410-653; the sequence is PPGYSPVHLL…GDSNGMSGGE (244 aa). The helical transmembrane segment at 654–674 threads the bilayer; it reads AAGITLGVTIALGIVITLAIY.

This sequence belongs to the MPEG1 family. In terms of assembly, homooligomer; predominantly forms a homooligomeric arc-shaped pore complex instead of complete rings of 16 subunits. Proteolytically processed in two steps to generate the Macrophage-expressed gene 1 protein, processed form: cleaved by trypsin in proximity of the helical transmembrane domain releases the ectodomain into the lysosomal lumen to orient the pore-forming domain toward the endogenous membranes, and processed by the asparagine endopeptidase (LGMN). Proteolytic processing in antigen-containing vesicles is pH-dependent. In terms of processing, monoubiquitinated in response to bacterial infection; ubiquitination is required for vesicular localization and antibacterial activity and can be blocked by bacterial cell cycle inhibiting factor (cif). As to expression, expressed constitutively in a variety of cell types including macrophages, microglia, neutrophils, T cells, marginal zone B cells, keratinocytes, splenocytes and intestinal epithelial cells.

Its subcellular location is the cytoplasmic vesicle membrane. It localises to the cytoplasmic vesicle. The protein localises to the phagosome membrane. Its activity is regulated as follows. Forms arc- and ring-shaped pre-pores on top of the membrane at neutral to slightly acidic pH conditions and converts to pores upon acidification. Undergoes transition from the pre-pore to the pore in a processive clockwise hand-over-hand process. In the pore state, 2 alpha-helical regions refold into transmembrane hairpins (TMH1 and TMH2) in each protomer that form in the ensemble complex giant beta-barrel transmembrane pores. Pore-forming protein involved in both innate and adaptive immunity. Plays a central role in antigen cross-presentation in dendritic cells by forming a pore in antigen-containing compartments, thereby promoting delivery of antigens for cross-presentation. Also involved in innate immune response following bacterial infection; shows antibacterial activity against a wide spectrum of Gram-positive, Gram-negative and acid-fast bacteria. Reduces the viability of the intracytosolic pathogen L.monocytogenes by inhibiting acidification of the phagocytic vacuole of host cells which restricts bacterial translocation from the vacuole to the cytosol. Required for the antibacterial activity of reactive oxygen species and nitric oxide. Its function is as follows. Pore-forming protein that plays a central role in antigen cross-presentation in dendritic cells by mediating delivery of antigens for cross-presentation. Dendritic cells bridge innate and adaptive immunity by capturing exogenous antigens on MHC class-I molecules and presenting them to naive CD8(+) T-cells. Acts by forming a pore in antigen-containing compartments, promoting the release of antigens into the cytosol, enabling generation of MHCI:peptide complexes and T-cell priming. The chain is Macrophage-expressed gene 1 protein from Mus musculus (Mouse).